A 248-amino-acid chain; its full sequence is Non-specific acid phosphatase (248 aa).

The signal sequence occupies residues 1-20; the sequence is MKKLLAVFCAGAFVSTSVFA.

This sequence belongs to the class A bacterial acid phosphatase family.

The protein localises to the periplasm. It carries out the reaction a phosphate monoester + H2O = an alcohol + phosphate. The polypeptide is Non-specific acid phosphatase (phoN) (Providencia stuartii).